Here is a 477-residue protein sequence, read N- to C-terminus: Cysteine--tRNA ligase (477 aa).

Cys-30 lines the Zn(2+) pocket. The 'HIGH' region signature appears at Pro-32–His-42. Positions 209, 234, and 238 each coordinate Zn(2+). The short motif at Lys-267–Ser-271 is the 'KMSKS' region element. Lys-270 contributes to the ATP binding site.

It belongs to the class-I aminoacyl-tRNA synthetase family. The cofactor is Zn(2+).

The protein resides in the cytoplasm. The catalysed reaction is tRNA(Cys) + L-cysteine + ATP = L-cysteinyl-tRNA(Cys) + AMP + diphosphate. This chain is Cysteine--tRNA ligase, found in Staphylothermus marinus (strain ATCC 43588 / DSM 3639 / JCM 9404 / F1).